Consider the following 532-residue polypeptide: Probable cytochrome c oxidase subunit 1 (532 aa).

8 consecutive transmembrane segments (helical) span residues 33–53 (IMYI…SLLF), 74–94 (VLIT…ALFG), 95–115 (GFGN…FPRL), 118–138 (ISFW…FVDG), 163–183 (MAIF…INLI), 200–220 (PLFV…MPVL), 252–272 (LFWF…FGIV), and 284–304 (IFGY…GFIV). His79 is a Fe(II)-heme a binding site. Positions 258 and 262 each coordinate Cu cation. His307 and His308 together coordinate Cu cation. A run of 2 helical transmembrane segments spans residues 318–338 (ALIY…IKIF) and 355–375 (MLFS…GIIL). Heme a3 is bound at residue His393. 3 consecutive transmembrane segments (helical) span residues 394–414 (FHYT…YYWF), 431–451 (FWIT…LGLA), and 473–493 (IGAG…FYTL). His395 contacts Fe(II)-heme a.

This sequence belongs to the heme-copper respiratory oxidase family.

It is found in the cell membrane. The enzyme catalyses 4 Fe(II)-[cytochrome c] + O2 + 8 H(+)(in) = 4 Fe(III)-[cytochrome c] + 2 H2O + 4 H(+)(out). It functions in the pathway energy metabolism; oxidative phosphorylation. In terms of biological role, cytochrome c oxidase is the component of the respiratory chain that catalyzes the reduction of oxygen to water. Subunits 1-3 form the functional core of the enzyme complex. CO I is the catalytic subunit of the enzyme. Electrons originating in cytochrome c are transferred via the copper A center of subunit 2 and heme A of subunit 1 to the bimetallic center formed by heme A3 and copper B. This is Probable cytochrome c oxidase subunit 1 (ctaD) from Rickettsia bellii (strain RML369-C).